The sequence spans 351 residues: Photosystem II D2 protein (351 aa).

The chain crosses the membrane as a helical span at residues 39–59 (CAYMAIGGWLTGTTFATSWYT). H116 is a binding site for chlorophyll a. Residues 123–139 (GFMLRQFEIARLVGVRP) traverse the membrane as a helical segment. Pheophytin a contacts are provided by Q128 and N141. Residues 151–164 (LFVSVFLIYPLGQS) form a helical membrane-spanning segment. Residue H196 coordinates chlorophyll a. The helical transmembrane segment at 206–226 (GALLCAIHGATVENTLFEDGD) threads the bilayer. 2 residues coordinate a plastoquinone: H213 and F260. H213 is a Fe cation binding site. H267 is a binding site for Fe cation. Residues 277–293 (GLWMSAIGVVGLALNLR) form a helical membrane-spanning segment.

This sequence belongs to the reaction center PufL/M/PsbA/D family. As to quaternary structure, PSII is composed of 1 copy each of membrane proteins PsbA, PsbB, PsbC, PsbD, PsbE, PsbF, PsbH, PsbI, PsbJ, PsbK, PsbL, PsbM, PsbT, PsbX, PsbY, PsbZ, Psb30/Ycf12, peripheral proteins PsbO, CyanoQ (PsbQ), PsbU, PsbV and a large number of cofactors. It forms dimeric complexes. The cofactor is The D1/D2 heterodimer binds P680, chlorophylls that are the primary electron donor of PSII, and subsequent electron acceptors. It shares a non-heme iron and each subunit binds pheophytin, quinone, additional chlorophylls, carotenoids and lipids. There is also a Cl(-1) ion associated with D1 and D2, which is required for oxygen evolution. The PSII complex binds additional chlorophylls, carotenoids and specific lipids..

Its subcellular location is the cellular thylakoid membrane. The catalysed reaction is 2 a plastoquinone + 4 hnu + 2 H2O = 2 a plastoquinol + O2. Functionally, photosystem II (PSII) is a light-driven water:plastoquinone oxidoreductase that uses light energy to abstract electrons from H(2)O, generating O(2) and a proton gradient subsequently used for ATP formation. It consists of a core antenna complex that captures photons, and an electron transfer chain that converts photonic excitation into a charge separation. The D1/D2 (PsbA/PsbD) reaction center heterodimer binds P680, the primary electron donor of PSII as well as several subsequent electron acceptors. D2 is needed for assembly of a stable PSII complex. This is Photosystem II D2 protein from Prochlorothrix hollandica.